A 172-amino-acid polypeptide reads, in one-letter code: 3-hydroxydecanoyl-[acyl-carrier-protein] dehydratase (172 aa).

H71 is an active-site residue.

The protein belongs to the thioester dehydratase family. FabA subfamily. As to quaternary structure, homodimer.

Its subcellular location is the cytoplasm. The enzyme catalyses a (3R)-hydroxyacyl-[ACP] = a (2E)-enoyl-[ACP] + H2O. It catalyses the reaction (3R)-hydroxydecanoyl-[ACP] = (2E)-decenoyl-[ACP] + H2O. The catalysed reaction is (2E)-decenoyl-[ACP] = (3Z)-decenoyl-[ACP]. The protein operates within lipid metabolism; fatty acid biosynthesis. Functionally, necessary for the introduction of cis unsaturation into fatty acids. Catalyzes the dehydration of (3R)-3-hydroxydecanoyl-ACP to E-(2)-decenoyl-ACP and then its isomerization to Z-(3)-decenoyl-ACP. Can catalyze the dehydratase reaction for beta-hydroxyacyl-ACPs with saturated chain lengths up to 16:0, being most active on intermediate chain length. The protein is 3-hydroxydecanoyl-[acyl-carrier-protein] dehydratase of Yersinia pseudotuberculosis serotype O:1b (strain IP 31758).